The following is a 168-amino-acid chain: Cell division inhibitor SulA (168 aa).

Positions 105–111 (ALETGNY) are ftsZ binding. The tract at residues 161-168 (RIHSRMVH) is lon protease binding.

It belongs to the SulA family. In terms of assembly, interacts with FtsZ. In terms of processing, is rapidly cleaved and degraded by the Lon protease once DNA damage is repaired.

Functionally, component of the SOS system and an inhibitor of cell division. Accumulation of SulA causes rapid cessation of cell division and the appearance of long, non-septate filaments. In the presence of GTP, binds a polymerization-competent form of FtsZ in a 1:1 ratio, thus inhibiting FtsZ polymerization and therefore preventing it from participating in the assembly of the Z ring. This mechanism prevents the premature segregation of damaged DNA to daughter cells during cell division. In Cronobacter turicensis (strain DSM 18703 / CCUG 55852 / LMG 23827 / z3032), this protein is Cell division inhibitor SulA.